The sequence spans 322 residues: MSAKPDLKIVLCSPRGFCAGVVRAIDTVERALDKYGAPVYVRHEIVHNKYVVDGLKKKGAIFVEELAEIPESTTAPVVFSAHGVPKSVPADAQSRNLFSLDATCPLVTKVHREAAIHFKRGREIFLIGHSHHPEVVGTLGQLPVGAVTLIETAEDAKTITPKDPNNLAFVTQTTLSIDDTAEIVALLKERFPNINGPHKEDICYATTNRQLAVKKVAPVVDALIVVGAPNSSNSQRLREVAEREGCPIAVLAQRAADLDWKRFENITSLGITAGASAPEVIVEEIMDAFAERFTLHVETVSAAEENEFFPLPRQVRPEAAAE.

Position 18 (C18) interacts with [4Fe-4S] cluster. (2E)-4-hydroxy-3-methylbut-2-enyl diphosphate-binding residues include H47 and H82. Dimethylallyl diphosphate is bound by residues H47 and H82. Isopentenyl diphosphate is bound by residues H47 and H82. C104 contributes to the [4Fe-4S] cluster binding site. H132 is a binding site for (2E)-4-hydroxy-3-methylbut-2-enyl diphosphate. H132 serves as a coordination point for dimethylallyl diphosphate. Isopentenyl diphosphate is bound at residue H132. E134 serves as the catalytic Proton donor. T173 contacts (2E)-4-hydroxy-3-methylbut-2-enyl diphosphate. [4Fe-4S] cluster is bound at residue C203. The (2E)-4-hydroxy-3-methylbut-2-enyl diphosphate site is built by S231, S232, N233, and S276. Positions 231, 232, 233, and 276 each coordinate dimethylallyl diphosphate. Positions 231, 232, 233, and 276 each coordinate isopentenyl diphosphate.

It belongs to the IspH family. Requires [4Fe-4S] cluster as cofactor.

The enzyme catalyses isopentenyl diphosphate + 2 oxidized [2Fe-2S]-[ferredoxin] + H2O = (2E)-4-hydroxy-3-methylbut-2-enyl diphosphate + 2 reduced [2Fe-2S]-[ferredoxin] + 2 H(+). It catalyses the reaction dimethylallyl diphosphate + 2 oxidized [2Fe-2S]-[ferredoxin] + H2O = (2E)-4-hydroxy-3-methylbut-2-enyl diphosphate + 2 reduced [2Fe-2S]-[ferredoxin] + 2 H(+). Its pathway is isoprenoid biosynthesis; dimethylallyl diphosphate biosynthesis; dimethylallyl diphosphate from (2E)-4-hydroxy-3-methylbutenyl diphosphate: step 1/1. It functions in the pathway isoprenoid biosynthesis; isopentenyl diphosphate biosynthesis via DXP pathway; isopentenyl diphosphate from 1-deoxy-D-xylulose 5-phosphate: step 6/6. Functionally, catalyzes the conversion of 1-hydroxy-2-methyl-2-(E)-butenyl 4-diphosphate (HMBPP) into a mixture of isopentenyl diphosphate (IPP) and dimethylallyl diphosphate (DMAPP). Acts in the terminal step of the DOXP/MEP pathway for isoprenoid precursor biosynthesis. The chain is 4-hydroxy-3-methylbut-2-enyl diphosphate reductase 1 from Bradyrhizobium diazoefficiens (strain JCM 10833 / BCRC 13528 / IAM 13628 / NBRC 14792 / USDA 110).